The following is a 731-amino-acid chain: EF-hand calcium-binding domain-containing protein 4B (731 aa).

The tract at residues 1–45 is disordered; sequence MAAPDGRVVSRPQRLGQGSGQGPKGSGACLHPLDSLEQKETQEQT. Positions 84–119 constitute an EF-hand domain; that stretch reads LSLEELEDVFDALDADGNGYLTPQEFTTGFSHFFFS. Aspartate 97, aspartate 99, asparagine 101, tyrosine 103, and glutamate 108 together coordinate Ca(2+). The stretch at 201–382 forms a coiled coil; it reads LTRIISQLQE…RERNKHLRDE (182 aa). Residues 349 to 540 are proline-rich domain (PRD) which mediates interaction with VAV1; that stretch reads MEVYRVTESL…ALCKEESSPS (192 aa). Disordered regions lie at residues 426-466 and 494-528; these read SEEE…PYPR and CSEEEEVSDQGVQGQIPEAPPLKLTPTSPRGQPVG. Positions 554, 556, 557, 558, 559, 560, 571, 572, and 577 each coordinate GTP. Threonine 559 provides a ligand contact to Mg(2+). The interval 572–580 is switch-I; that stretch reads PGMAATVGI. Residues threonine 577 and aspartate 600 each contribute to the Mg(2+) site. GTP is bound by residues glycine 603, asparagine 658, lysine 659, aspartate 661, and alanine 689. A switch-II region spans residues 603 to 619; sequence GQERYRCITQQFFRKAD. Cysteine 729 carries the S-geranylgeranyl cysteine lipid modification.

Belongs to the EFCAB4 family. In terms of assembly, interacts with ORAI1 and STIM1; the interaction is direct and takes place in absence of Ca(2+). Forms a complex with ORAI1 and STIM1 at low concentration of Ca(2+), the complex dissociates at elevated Ca(2+) concentrations. Interacts with ORAI2 and ORAI3. Interacts with DYNC1H1. Interacts with the dynein-dynactin complex in a Ca(2+)-dependent manner. Interacts with VAV1. The cofactor is Mg(2+). Expressed in the Jurkat T-cell line. As to expression, expressed in endothelial cells. Expressed in Weibel-Palade bodies (which are P-selectin/SELP negative) in endothelial cells. Expressed in the Jurkat T-cell line.

It localises to the cytoplasm. The protein localises to the cytoskeleton. Its subcellular location is the microtubule organizing center. The protein resides in the cell membrane. It is found in the golgi apparatus membrane. It localises to the golgi apparatus. The protein localises to the trans-Golgi network membrane. Its subcellular location is the vesicle. It catalyses the reaction GTP + H2O = GDP + phosphate + H(+). In terms of biological role, ca(2+)-binding protein that plays a key role in store-operated Ca(2+) entry (SOCE) in T-cells by regulating CRAC channel activation. Acts as a cytoplasmic calcium-sensor that facilitates the clustering of ORAI1 and STIM1 at the junctional regions between the plasma membrane and the endoplasmic reticulum upon low Ca(2+) concentration. It thereby regulates CRAC channel activation, including translocation and clustering of ORAI1 and STIM1. Upon increase of cytoplasmic Ca(2+) resulting from opening of CRAC channels, dissociates from ORAI1 and STIM1, thereby destabilizing the ORAI1-STIM1 complex. Functionally, rab GTPase that mediates the trafficking of Weibel-Palade bodies (WPBs) to microtubule organizing center (MTOC) in endothelial cells in response to acute inflammatory stimuli. During histamine (but not thrombin) stimulation of endothelial cells, the dynein-bound form induces retrograde transport of a subset of WPBs along microtubules to the MTOC in a Ca(2+)-independent manner and its GTPase activity is essential for this function. Ca(2+)-regulated dynein adapter protein that activates dynein-mediated transport and dynein-dynactin motility on microtubules and regulates endosomal trafficking of CD47. Acts as an intracellular signaling module bridging two important T-cell receptor (TCR) signaling pathways, Ca(2+)-NFAT and JNK, to affect T-cell activation. In resting T-cells, is predominantly localized near TGN network in a GTP-bound form, upon TCR stimulation, localizes at the immunological synapse via interaction with VAV1 to activate downstream Ca(2+)-NFAT and JNK signaling pathways. Plays a role in T-helper 1 (Th1) cell differentiation and T-helper 17 (Th17) cell effector function. Plays a role in store-operated Ca(2+) entry (SOCE) in T-cells by regulating CRAC channel activation. The protein is EF-hand calcium-binding domain-containing protein 4B of Homo sapiens (Human).